Consider the following 140-residue polypeptide: Ribosomal RNA large subunit methyltransferase H (140 aa).

Residues leucine 55 and glycine 87 each coordinate S-adenosyl-L-methionine.

This sequence belongs to the RNA methyltransferase RlmH family. Homodimer.

The protein localises to the cytoplasm. It catalyses the reaction pseudouridine(1915) in 23S rRNA + S-adenosyl-L-methionine = N(3)-methylpseudouridine(1915) in 23S rRNA + S-adenosyl-L-homocysteine + H(+). In terms of biological role, specifically methylates the pseudouridine at position 1915 (m3Psi1915) in 23S rRNA. The sequence is that of Ribosomal RNA large subunit methyltransferase H from Erythrobacter litoralis (strain HTCC2594).